The chain runs to 81 residues: Ferredoxin (81 aa).

In terms of domain architecture, 4Fe-4S ferredoxin-type spans 2–30; it reads KYTIVDKETCIACGACGAAAPDIYDYDED. Residues C11, C14, C17, and C61 each contribute to the [4Fe-4S] cluster site.

It depends on [4Fe-4S] cluster as a cofactor.

Functionally, ferredoxins are iron-sulfur proteins that transfer electrons in a wide variety of metabolic reactions. This Bacillus thermoproteolyticus protein is Ferredoxin.